A 280-amino-acid chain; its full sequence is Putative pyruvate, phosphate dikinase regulatory protein (280 aa).

156–163 (GVSRTSKT) lines the ADP pocket.

Belongs to the pyruvate, phosphate/water dikinase regulatory protein family. PDRP subfamily.

The catalysed reaction is N(tele)-phospho-L-histidyl/L-threonyl-[pyruvate, phosphate dikinase] + ADP = N(tele)-phospho-L-histidyl/O-phospho-L-threonyl-[pyruvate, phosphate dikinase] + AMP + H(+). It catalyses the reaction N(tele)-phospho-L-histidyl/O-phospho-L-threonyl-[pyruvate, phosphate dikinase] + phosphate + H(+) = N(tele)-phospho-L-histidyl/L-threonyl-[pyruvate, phosphate dikinase] + diphosphate. Its function is as follows. Bifunctional serine/threonine kinase and phosphorylase involved in the regulation of the pyruvate, phosphate dikinase (PPDK) by catalyzing its phosphorylation/dephosphorylation. This is Putative pyruvate, phosphate dikinase regulatory protein from Hyphomonas neptunium (strain ATCC 15444).